Here is a 355-residue protein sequence, read N- to C-terminus: Holliday junction branch migration complex subunit RuvB (355 aa).

The interval 1–43 (MEEMDDFTVRRGEREDITGAAGPPEERPLDPAAFEEDDEPTLR) is disordered. Residues 4-203 (MDDFTVRRGE…FGFSARLDYY (200 aa)) form a large ATPase domain (RuvB-L) region. Residues 7-17 (FTVRRGEREDI) show a composition bias toward basic and acidic residues. ATP-binding positions include leucine 42, arginine 43, glycine 84, lysine 87, threonine 88, serine 89, 150–152 (EDF), arginine 193, tyrosine 203, and arginine 240. Threonine 88 contributes to the Mg(2+) binding site. Residues 204 to 274 (EPHELEKIVV…TANAALEMQG (71 aa)) form a small ATPAse domain (RuvB-S) region. The segment at 277 to 355 (HLGLDRTDRE…HLGFPVRDGG (79 aa)) is head domain (RuvB-H). 3 residues coordinate DNA: arginine 313, arginine 332, and arginine 337.

This sequence belongs to the RuvB family. As to quaternary structure, homohexamer. Forms an RuvA(8)-RuvB(12)-Holliday junction (HJ) complex. HJ DNA is sandwiched between 2 RuvA tetramers; dsDNA enters through RuvA and exits via RuvB. An RuvB hexamer assembles on each DNA strand where it exits the tetramer. Each RuvB hexamer is contacted by two RuvA subunits (via domain III) on 2 adjacent RuvB subunits; this complex drives branch migration. In the full resolvosome a probable DNA-RuvA(4)-RuvB(12)-RuvC(2) complex forms which resolves the HJ.

Its subcellular location is the cytoplasm. It carries out the reaction ATP + H2O = ADP + phosphate + H(+). Functionally, the RuvA-RuvB-RuvC complex processes Holliday junction (HJ) DNA during genetic recombination and DNA repair, while the RuvA-RuvB complex plays an important role in the rescue of blocked DNA replication forks via replication fork reversal (RFR). RuvA specifically binds to HJ cruciform DNA, conferring on it an open structure. The RuvB hexamer acts as an ATP-dependent pump, pulling dsDNA into and through the RuvAB complex. RuvB forms 2 homohexamers on either side of HJ DNA bound by 1 or 2 RuvA tetramers; 4 subunits per hexamer contact DNA at a time. Coordinated motions by a converter formed by DNA-disengaged RuvB subunits stimulates ATP hydrolysis and nucleotide exchange. Immobilization of the converter enables RuvB to convert the ATP-contained energy into a lever motion, pulling 2 nucleotides of DNA out of the RuvA tetramer per ATP hydrolyzed, thus driving DNA branch migration. The RuvB motors rotate together with the DNA substrate, which together with the progressing nucleotide cycle form the mechanistic basis for DNA recombination by continuous HJ branch migration. Branch migration allows RuvC to scan DNA until it finds its consensus sequence, where it cleaves and resolves cruciform DNA. The protein is Holliday junction branch migration complex subunit RuvB of Rubrobacter xylanophilus (strain DSM 9941 / JCM 11954 / NBRC 16129 / PRD-1).